The primary structure comprises 58 residues: Small ribosomal subunit protein bS21 (58 aa).

Positions 39-58 are disordered; sequence DKPSVKKRAKSKAAAKYRSR. Positions 43–58 are enriched in basic residues; that stretch reads VKKRAKSKAAAKYRSR.

This sequence belongs to the bacterial ribosomal protein bS21 family.

This Chlamydia abortus (strain DSM 27085 / S26/3) (Chlamydophila abortus) protein is Small ribosomal subunit protein bS21.